A 605-amino-acid chain; its full sequence is Pyruvate decarboxylase 1 (605 aa).

Residues aspartate 67 and histidine 154 each coordinate substrate. The tract at residues aspartate 432–isoleucine 514 is thiamine pyrophosphate binding. Positions 482, 509, and 511 each coordinate Mg(2+). Position 515 (glutamate 515) interacts with substrate.

Belongs to the TPP enzyme family. In terms of assembly, homotetramer. It depends on a metal cation as a cofactor. The cofactor is thiamine diphosphate.

The enzyme catalyses a 2-oxocarboxylate + H(+) = an aldehyde + CO2. This Oryza sativa subsp. indica (Rice) protein is Pyruvate decarboxylase 1 (PDC1).